The sequence spans 147 residues: UPF0306 protein YhbP (147 aa).

Belongs to the UPF0306 family.

This is UPF0306 protein YhbP from Salmonella arizonae (strain ATCC BAA-731 / CDC346-86 / RSK2980).